A 500-amino-acid polypeptide reads, in one-letter code: UBX domain-containing protein 5 (500 aa).

A compositionally biased stretch (low complexity) spans 50–61; sequence SNNTPTPSNSTP. Residues 50–70 form a disordered region; sequence SNNTPTPSNSTPMAPTSVDSD. Position 139 is a phosphoserine (serine 139). 2 disordered regions span residues 142–169 and 371–399; these read NQRL…EEND and ESLN…QEPD. Residues 148-161 are compositionally biased toward low complexity; it reads TNTNTYINDNSSDS. One can recognise a UBX domain in the interval 415–493; the sequence is KPGITTRIQI…GLKNSSLLLE (79 aa).

Interacts with CDC48.

The protein resides in the nucleus. Its subcellular location is the cytoplasm. Functionally, involved in CDC48-dependent protein degradation through the ubiquitin/proteasome pathway. The chain is UBX domain-containing protein 5 (UBX5) from Saccharomyces cerevisiae (strain ATCC 204508 / S288c) (Baker's yeast).